Here is a 363-residue protein sequence, read N- to C-terminus: sn-glycerol-3-phosphate import ATP-binding protein UgpC (363 aa).

An ABC transporter domain is found at 4 to 235 (VVLRNVRKTY…PATTFVASFI (232 aa)). 37-44 (GPSGCGKS) contacts ATP.

Belongs to the ABC transporter superfamily. sn-glycerol-3-phosphate importer (TC 3.A.1.1.3) family. As to quaternary structure, the complex is composed of two ATP-binding proteins (UgpC), two transmembrane proteins (UgpA and UgpE) and a solute-binding protein (UgpB).

The protein resides in the cell inner membrane. The catalysed reaction is sn-glycerol 3-phosphate(out) + ATP + H2O = sn-glycerol 3-phosphate(in) + ADP + phosphate + H(+). Part of the ABC transporter complex UgpBAEC involved in sn-glycerol-3-phosphate (G3P) import. Responsible for energy coupling to the transport system. This is sn-glycerol-3-phosphate import ATP-binding protein UgpC from Rhodopseudomonas palustris (strain ATCC BAA-98 / CGA009).